A 228-amino-acid chain; its full sequence is Phosphoglycolate phosphatase (228 aa).

Aspartate 12 functions as the Nucleophile in the catalytic mechanism. Mg(2+) is bound by residues aspartate 12, aspartate 14, and aspartate 177.

It belongs to the HAD-like hydrolase superfamily. CbbY/CbbZ/Gph/YieH family. Mg(2+) is required as a cofactor.

It carries out the reaction 2-phosphoglycolate + H2O = glycolate + phosphate. It functions in the pathway organic acid metabolism; glycolate biosynthesis; glycolate from 2-phosphoglycolate: step 1/1. Functionally, specifically catalyzes the dephosphorylation of 2-phosphoglycolate. Is involved in the dissimilation of the intracellular 2-phosphoglycolate formed during the DNA repair of 3'-phosphoglycolate ends, a major class of DNA lesions induced by oxidative stress. In Vibrio vulnificus (strain CMCP6), this protein is Phosphoglycolate phosphatase.